The chain runs to 614 residues: Putative ankyrin repeat protein RBE_0997 (614 aa).

9 ANK repeats span residues 3-32 (KDEE…DPNI), 36-65 (DDKP…NPNA), 69-98 (DGEP…DPNL), 102-131 (RKNT…NLNA), 135-164 (SGYP…NPNL), 168-197 (DGSP…NVEA), 201-231 (DGNT…DKEK), 239-268 (NGET…TVNI), and 272-301 (AGYT…ELKE). Residues 348–580 (NVEDIDYRKI…VQSAETFMNK (233 aa)) enclose the Glutamine amidotransferase type-1 domain. The Nucleophile role is filled by C444. Catalysis depends on residues H547 and E549.

The sequence is that of Putative ankyrin repeat protein RBE_0997 from Rickettsia bellii (strain RML369-C).